A 112-amino-acid polypeptide reads, in one-letter code: cAMP-regulated phosphoprotein 19 (112 aa).

At methionine 1 the chain carries N-acetylmethionine. The segment covering 1 to 11 (MSAEVPEAASA) has biased composition (low complexity). The tract at residues 1-49 (MSAEVPEAASAEEQKEMEDKVTSPEKAEEAKLKARYPHLGQKPGGSDFL) is disordered. Serine 2 is subject to N-acetylserine. Residues serine 2 and serine 23 each carry the phosphoserine modification. Residues 12 to 32 (EEQKEMEDKVTSPEKAEEAKL) are compositionally biased toward basic and acidic residues. 2 positions are modified to phosphoserine; by GWL: serine 62 and serine 104. Residues 73 to 112 (KNKQLPTAAPDKTEVTGDHIPTPQDLPQRKPSLVASKLAG) form a disordered region. A Phosphoserine; by PKA modification is found at serine 104. Position 109 is an N6-acetyllysine (lysine 109).

Belongs to the endosulfine family. Interacts (when phosphorylated at Ser-62) with PPP2R2D. Interacts with SNCA. Interacts with PPP2R2A; the interaction is direct and this interaction inhibits PP2A activity. In terms of processing, phosphorylation at Ser-62 by MASTL/GWL during mitosis is essential for interaction with PPP2R2D (PR55-delta) and subsequent inactivation of PP2A. Phosphorylated by PKA.

The protein resides in the cytoplasm. Protein phosphatase inhibitor that specifically inhibits protein phosphatase 2A (PP2A) during mitosis. Inhibition of PP2A is enhanced when ARPP19 is phosphorylated. When phosphorylated at Ser-62 during mitosis, specifically interacts with PPP2R2D (PR55-delta) and inhibits its activity, leading to inactivation of PP2A, an essential condition to keep cyclin-B1-CDK1 activity high during M phase. May indirectly enhance GAP-43 expression. The chain is cAMP-regulated phosphoprotein 19 (ARPP19) from Homo sapiens (Human).